The primary structure comprises 123 residues: Basic myotoxic phospholipase A2 PhTX-II (123 aa).

7 disulfides stabilise this stretch: Cys-26–Cys-116, Cys-28–Cys-45, Cys-44–Cys-95, Cys-50–Cys-123, Cys-51–Cys-88, Cys-58–Cys-81, and Cys-75–Cys-86. Positions 27, 29, and 31 each coordinate Ca(2+). His-48 is a catalytic residue. Asp-49 provides a ligand contact to Ca(2+). Asp-89 is a catalytic residue.

As to quaternary structure, monomer. Requires Ca(2+) as cofactor. Expressed by the venom gland.

It is found in the secreted. It catalyses the reaction a 1,2-diacyl-sn-glycero-3-phosphocholine + H2O = a 1-acyl-sn-glycero-3-phosphocholine + a fatty acid + H(+). With respect to regulation, P-bromophenacyl bromide (BPB) completely inhibits the catalytic and edematogenic activities. Enzymatic activity is also diminished by EDTA, heparin and crotapotins F2 and F3 from C.d.collilineatus. Inhibited by divalent cations different from calcium ions (cadmium, magnesium, manganese, zinc), since they act as competitive antagonists of this cofactor. In terms of biological role, snake venom phospholipase A2 (PLA2) that induces myotoxicity and local edema in mice. In addition, it causes neuromuscular blockade in avian neuromuscular preparations with a significant direct action on skeletal muscle function. Myotoxic action is exerted by both enzymatic and non-enzymatic mechanisms. PLA2 catalyzes the calcium-dependent hydrolysis of the 2-acyl groups in 3-sn-phosphoglycerides. This is Basic myotoxic phospholipase A2 PhTX-II from Bothrocophias hyoprora (Amazonian hognose viper).